The primary structure comprises 314 residues: MATNKFFKSLLFALTIAINSFGFCIQDAVAYPVFAQQNYSNPRAANGKLACANCHLNQKAIEIEAPQAVLPNSIFEVEIKVPYDTTKQQLGANGKKADLNVGGILMLPEGFKLAPKNQIPAEVKEKNKGVFISPYSSEFDNILVVGPIAGKTHQELIFPVMAPDPEKNSDIKYLTYPFYAGGNRGRGQVYPTGEKSNVNVFGANQSGQITEITVTEKGESTILILNSNGKQTSQVLPAGLILSIKQGQVVKADQPLNIDPNVGGFGQEESEIVLQNPIRIYGYLAFCFSVLITQIMLVLKKKQFEKVQAAELNF.

A signal peptide spans 1–30 (MATNKFFKSLLFALTIAINSFGFCIQDAVA). The heme site is built by Tyr31, Cys51, Cys54, and His55. A helical transmembrane segment spans residues 280 to 300 (IYGYLAFCFSVLITQIMLVLK).

It belongs to the cytochrome f family. In terms of assembly, the 4 large subunits of the cytochrome b6-f complex are cytochrome b6, subunit IV (17 kDa polypeptide, petD), cytochrome f and the Rieske protein, while the 4 small subunits are PetG, PetL, PetM and PetN. The complex functions as a dimer. The cofactor is heme.

The protein localises to the plastid. Its subcellular location is the chloroplast thylakoid membrane. In terms of biological role, component of the cytochrome b6-f complex, which mediates electron transfer between photosystem II (PSII) and photosystem I (PSI), cyclic electron flow around PSI, and state transitions. This Phaeodactylum tricornutum (strain CCAP 1055/1) protein is Cytochrome f.